The chain runs to 67 residues: ATP synthase F(0) complex subunit 8 (67 aa).

The chain crosses the membrane as a helical span at residues 8-24 (TWSITIMSMIMTLFIVF). K54 is modified (N6-acetyllysine; alternate). The residue at position 54 (K54) is an N6-succinyllysine; alternate. K57 carries the N6-acetyllysine modification.

Belongs to the ATPase protein 8 family. Component of the ATP synthase complex composed at least of ATP5F1A/subunit alpha, ATP5F1B/subunit beta, ATP5MC1/subunit c (homooctomer), MT-ATP6/subunit a, MT-ATP8/subunit 8, ATP5ME/subunit e, ATP5MF/subunit f, ATP5MG/subunit g, ATP5MK/subunit k, ATP5MJ/subunit j, ATP5F1C/subunit gamma, ATP5F1D/subunit delta, ATP5F1E/subunit epsilon, ATP5PF/subunit F6, ATP5PB/subunit b, ATP5PD/subunit d, ATP5PO/subunit OSCP. ATP synthase complex consists of a soluble F(1) head domain (subunits alpha(3) and beta(3)) - the catalytic core - and a membrane F(0) domain - the membrane proton channel (subunits c, a, 8, e, f, g, k and j). These two domains are linked by a central stalk (subunits gamma, delta, and epsilon) rotating inside the F1 region and a stationary peripheral stalk (subunits F6, b, d, and OSCP). Interacts with PRICKLE3.

The protein localises to the mitochondrion membrane. In terms of biological role, subunit 8, of the mitochondrial membrane ATP synthase complex (F(1)F(0) ATP synthase or Complex V) that produces ATP from ADP in the presence of a proton gradient across the membrane which is generated by electron transport complexes of the respiratory chain. ATP synthase complex consist of a soluble F(1) head domain - the catalytic core - and a membrane F(1) domain - the membrane proton channel. These two domains are linked by a central stalk rotating inside the F(1) region and a stationary peripheral stalk. During catalysis, ATP synthesis in the catalytic domain of F(1) is coupled via a rotary mechanism of the central stalk subunits to proton translocation. In vivo, can only synthesize ATP although its ATP hydrolase activity can be activated artificially in vitro. Part of the complex F(0) domain. The polypeptide is ATP synthase F(0) complex subunit 8 (Felis catus (Cat)).